We begin with the raw amino-acid sequence, 160 residues long: uncharacterized protein (160 aa).

Residues 1 to 18 form the signal peptide; it reads MELLSLAILSSFFAVANQ.

This is an uncharacterized protein from Caenorhabditis elegans.